The sequence spans 124 residues: UPF0102 protein BL0935 (124 aa).

The protein belongs to the UPF0102 family.

In Bifidobacterium longum (strain NCC 2705), this protein is UPF0102 protein BL0935.